An 86-amino-acid chain; its full sequence is Large ribosomal subunit protein bL27 (86 aa).

The segment covering 1–10 has biased composition (gly residues); it reads MAQKKGGGST. Residues 1 to 21 are disordered; it reads MAQKKGGGSTRNGRDSESKRL.

It belongs to the bacterial ribosomal protein bL27 family.

In Cupriavidus taiwanensis (strain DSM 17343 / BCRC 17206 / CCUG 44338 / CIP 107171 / LMG 19424 / R1) (Ralstonia taiwanensis (strain LMG 19424)), this protein is Large ribosomal subunit protein bL27.